The chain runs to 187 residues: UPF0301 protein ECA3925 (187 aa).

Belongs to the UPF0301 (AlgH) family.

This chain is UPF0301 protein ECA3925, found in Pectobacterium atrosepticum (strain SCRI 1043 / ATCC BAA-672) (Erwinia carotovora subsp. atroseptica).